The following is a 591-amino-acid chain: Thiamine transporter thi9 (591 aa).

The segment covering 1-22 has biased composition (polar residues); it reads MPSSQISHQDPELGQTSSGSSS. Positions 1-42 are disordered; that stretch reads MPSSQISHQDPELGQTSSGSSSIKEKAEPQLYAGPIDPARRP. The next 5 helical transmembrane spans lie at 98-118, 342-362, 397-417, 450-470, and 545-565; these read LTFSWGISFGGPAAYWSAMLV, IFYSTVTSFIVAFSLAILYLF, VVMNVVIILEIFLNGVVSVLA, ITVIYIVSALLLCTILPSAVA, and YAVVIMGGVSIFAIICTIVIP. A Phosphoserine modification is found at S585.

Belongs to the amino acid-polyamine-organocation (APC) superfamily.

It localises to the endoplasmic reticulum membrane. Its subcellular location is the cell membrane. Its function is as follows. Thiamine transporter involved in the cellular uptake of thiamine. Pyrithiamine, oxythiamine, amprolium, and the thiazole part of thiamine have been shown to be also substrates of thi9. In Schizosaccharomyces pombe (strain 972 / ATCC 24843) (Fission yeast), this protein is Thiamine transporter thi9 (thi9).